A 118-amino-acid polypeptide reads, in one-letter code: uncharacterized protein (118 aa).

Its subcellular location is the mitochondrion. This is an uncharacterized protein from Arabidopsis thaliana (Mouse-ear cress).